Consider the following 425-residue polypeptide: COP9 signalosome complex subunit 1 (425 aa).

Positions 219–379 constitute a PCI domain; the sequence is ASSGVPPEIY…KSKALQTLEN (161 aa).

It belongs to the CSN1 family. In terms of assembly, component of the COP9 signalosome (CSN) complex.

It is found in the cytoplasm. The protein localises to the nucleus. In terms of biological role, component of the COP9 signalosome (CSN) complex that acts as an regulator of the ubiquitin (Ubl) conjugation pathway by mediating the deneddylation of the cullin subunit of SCF-type E3 ubiquitin-protein ligase complexes. The CSN complex is involved in the regulation of the circadian clock through its control of the stability of the SCF(FWD-1) complex. This Neurospora crassa (strain ATCC 24698 / 74-OR23-1A / CBS 708.71 / DSM 1257 / FGSC 987) protein is COP9 signalosome complex subunit 1 (csn-1).